Here is a 785-residue protein sequence, read N- to C-terminus: MGSDWDEIKRLAADFQKAQLTSTLQKLSERNCVEIVTLLLEKQLLEVVFTNNGKEYITPDHLEREIQDELYANGGRANLVEVSRTLNVDLSRIVALAERIAAENPLVHLVLGQLIDEDYISHIAQEINEKLALRGEISISDLASQFDLPSEFLQQDVVEKHLGKIIKGRQDATNPRVFFTQAYIQRCKAKIRGALAAITRPTNVAVILQQINVQEKIFHSLLDEISPAGQVTSKLANAQYVPHIYAKTQADWVNSFYKQNSFLEYDAINKLGISDAKSYIRKQFPNEEFLFLKRVALGARLVELTVVTALNECSATKQYLDLTTILPSNLSEEDIEEVFSAIMAQKHSNPSNFVYLDSIVFSQPYLTELVQPCHALAEAQAKAAIDSGVYQQFVVEKTLAQKGNASFQDQDDDGKLDKRDERRKKASSGKAGGGAQGRETKTKSTKKHQRRSAAAQNDSDDEDDVQHQGSRGAGGGGGNKKTVKPLDLVKTADIEKLINASLQEEGLEHLAPSIAALYLNQLNQAALAKAQELYEATPQTNRRQTHAAIQDRINTLLIDIRLYEKGLKLFSHDTQTQLVKYLLKSLGNDICNELSLYVASECNLTVKNTSLNVDQRIKLAQECDAEYRSALLEQNKALNKSIDDFELATESVLKACSMIIKKVDKKKDRLLIADHKNKLQQQLLDCQEPALLLHLAALILFTTISGCILHASGKFVSAILQHIRGSLSDQQNDMLLRYHDLVLQVLQTAPESDDSKIAHEQLQIMQSKVVELAQNYTRASVSKAD.

Positions 405–483 are disordered; sequence ASFQDQDDDG…GGGGGNKKTV (79 aa).

Belongs to the UFL1 family.

E3 UFM1-protein ligase that mediates ufmylation of target proteins. The sequence is that of E3 UFM1-protein ligase 1 homolog from Drosophila pseudoobscura pseudoobscura (Fruit fly).